The sequence spans 140 residues: Hemoglobin subunit beta (140 aa).

A Globin domain is found at 1–140 (GSDLVSGFWG…VGDALAKAYH (140 aa)). Heme b-binding residues include histidine 57 and histidine 86.

Belongs to the globin family. In terms of assembly, heterotetramer of two alpha chains and two beta chains. Red blood cells.

Functionally, involved in oxygen transport from the lung to the various peripheral tissues. The chain is Hemoglobin subunit beta (HBB) from Pelophylax lessonae (Pool frog).